The sequence spans 127 residues: MFRTMMRAKLHRATVTEANLNYVGSITIDEDLMDAVNIVENEKVQIVNNNNGARLETYVIKGERGSGVVCLNGAAARLVQPGDKVIIICYGLVAEENIHKQEPKIAVLDDDNQIIEMLGAEKAGTIL.

Ser25 serves as the catalytic Schiff-base intermediate with substrate; via pyruvic acid. Ser25 carries the post-translational modification Pyruvic acid (Ser). Position 57 (Thr57) interacts with substrate. The active-site Proton donor is Tyr58. Substrate is bound at residue 73-75 (GAA).

This sequence belongs to the PanD family. As to quaternary structure, heterooctamer of four alpha and four beta subunits. Requires pyruvate as cofactor. Post-translationally, is synthesized initially as an inactive proenzyme, which is activated by self-cleavage at a specific serine bond to produce a beta-subunit with a hydroxyl group at its C-terminus and an alpha-subunit with a pyruvoyl group at its N-terminus.

The protein resides in the cytoplasm. It carries out the reaction L-aspartate + H(+) = beta-alanine + CO2. The protein operates within cofactor biosynthesis; (R)-pantothenate biosynthesis; beta-alanine from L-aspartate: step 1/1. Its function is as follows. Catalyzes the pyruvoyl-dependent decarboxylation of aspartate to produce beta-alanine. The polypeptide is Aspartate 1-decarboxylase (Bacillus cereus (strain 03BB102)).